A 409-amino-acid polypeptide reads, in one-letter code: Phosphoglycerate kinase (409 aa).

Substrate is bound by residues 23–25 (DIN), 63–66 (HQSR), arginine 120, and arginine 160. Residues glutamate 333 and 359 to 362 (GGHL) contribute to the ATP site.

It belongs to the phosphoglycerate kinase family. Monomer.

The protein resides in the cytoplasm. The enzyme catalyses (2R)-3-phosphoglycerate + ATP = (2R)-3-phospho-glyceroyl phosphate + ADP. The protein operates within carbohydrate degradation; glycolysis; pyruvate from D-glyceraldehyde 3-phosphate: step 2/5. The protein is Phosphoglycerate kinase (pgk) of Methanobacterium bryantii.